Consider the following 135-residue polypeptide: Small ribosomal subunit protein uS8 (135 aa).

The protein belongs to the universal ribosomal protein uS8 family. In terms of assembly, part of the 30S ribosomal subunit. Contacts proteins S5 and S12.

In terms of biological role, one of the primary rRNA binding proteins, it binds directly to 16S rRNA central domain where it helps coordinate assembly of the platform of the 30S subunit. This is Small ribosomal subunit protein uS8 from Corynebacterium urealyticum (strain ATCC 43042 / DSM 7109).